Consider the following 142-residue polypeptide: Large ribosomal subunit protein uL11 (142 aa).

Belongs to the universal ribosomal protein uL11 family. In terms of assembly, part of the ribosomal stalk of the 50S ribosomal subunit. Interacts with L10 and the large rRNA to form the base of the stalk. L10 forms an elongated spine to which L12 dimers bind in a sequential fashion forming a multimeric L10(L12)X complex. Post-translationally, one or more lysine residues are methylated.

In terms of biological role, forms part of the ribosomal stalk which helps the ribosome interact with GTP-bound translation factors. This chain is Large ribosomal subunit protein uL11, found in Hydrogenovibrio crunogenus (strain DSM 25203 / XCL-2) (Thiomicrospira crunogena).